Consider the following 462-residue polypeptide: Asparagine--tRNA ligase (462 aa).

It belongs to the class-II aminoacyl-tRNA synthetase family. As to quaternary structure, homodimer.

It is found in the cytoplasm. The catalysed reaction is tRNA(Asn) + L-asparagine + ATP = L-asparaginyl-tRNA(Asn) + AMP + diphosphate + H(+). This Borrelia garinii subsp. bavariensis (strain ATCC BAA-2496 / DSM 23469 / PBi) (Borreliella bavariensis) protein is Asparagine--tRNA ligase.